The sequence spans 468 residues: 3-isopropylmalate dehydratase large subunit (468 aa).

The [4Fe-4S] cluster site is built by C347, C407, and C410.

This sequence belongs to the aconitase/IPM isomerase family. LeuC type 1 subfamily. Heterodimer of LeuC and LeuD. The cofactor is [4Fe-4S] cluster.

The enzyme catalyses (2R,3S)-3-isopropylmalate = (2S)-2-isopropylmalate. Its pathway is amino-acid biosynthesis; L-leucine biosynthesis; L-leucine from 3-methyl-2-oxobutanoate: step 2/4. In terms of biological role, catalyzes the isomerization between 2-isopropylmalate and 3-isopropylmalate, via the formation of 2-isopropylmaleate. This Synechococcus sp. (strain CC9311) protein is 3-isopropylmalate dehydratase large subunit.